A 1383-amino-acid chain; its full sequence is DNA-directed RNA polymerase subunit beta (1383 aa).

Belongs to the RNA polymerase beta chain family. In terms of assembly, the RNAP catalytic core consists of 2 alpha, 1 beta, 1 beta' and 1 omega subunit. When a sigma factor is associated with the core the holoenzyme is formed, which can initiate transcription.

The enzyme catalyses RNA(n) + a ribonucleoside 5'-triphosphate = RNA(n+1) + diphosphate. DNA-dependent RNA polymerase catalyzes the transcription of DNA into RNA using the four ribonucleoside triphosphates as substrates. The sequence is that of DNA-directed RNA polymerase subunit beta from Bartonella tribocorum (strain CIP 105476 / IBS 506).